The chain runs to 103 residues: Truncated secreted TNF-receptor-like protein A53 (103 aa).

The stretch at 36-73 (SCDKGEYLDKRHNQCCNRCPPGEFAKVRCNGNDNTKCE) is one TNFR-Cys 1 repeat. 3 cysteine pairs are disulfide-bonded: cysteine 37–cysteine 50, cysteine 51–cysteine 64, and cysteine 54–cysteine 72. One copy of the TNFR-Cys 2; truncated repeat lies at 74 to 103 (RCPPHTYTTIPIILMDVINVENAQQDHLIR).

The protein belongs to the poxviridae A53R protein family.

The protein is Truncated secreted TNF-receptor-like protein A53 of Vaccinia virus (strain Copenhagen) (VACV).